A 393-amino-acid chain; its full sequence is Proteasome-activating nucleotidase (393 aa).

The stretch at 14-53 (SDEVQLVRLLEEKIKSLQIEIENLRKELNYYKAEMEKMLS) forms a coiled coil. ATP contacts are provided by residues 178 to 183 (GTGKTM) and Y317. The interval 391 to 393 (KYS) is docks into pockets in the proteasome alpha-ring to cause gate opening.

This sequence belongs to the AAA ATPase family. Homohexamer. The hexameric complex has a two-ring architecture resembling a top hat that caps the 20S proteasome core at one or both ends. Upon ATP-binding, the C-terminus of PAN interacts with the alpha-rings of the proteasome core by binding to the intersubunit pockets.

The protein localises to the cytoplasm. ATPase which is responsible for recognizing, binding, unfolding and translocation of substrate proteins into the archaeal 20S proteasome core particle. Is essential for opening the gate of the 20S proteasome via an interaction with its C-terminus, thereby allowing substrate entry and access to the site of proteolysis. Thus, the C-termini of the proteasomal ATPase function like a 'key in a lock' to induce gate opening and therefore regulate proteolysis. Unfolding activity requires energy from ATP hydrolysis, whereas ATP binding alone promotes ATPase-20S proteasome association which triggers gate opening, and supports translocation of unfolded substrates. The sequence is that of Proteasome-activating nucleotidase from Saccharolobus islandicus (strain M.16.27) (Sulfolobus islandicus).